Here is a 262-residue protein sequence, read N- to C-terminus: Polyamine aminopropyltransferase (262 aa).

A PABS domain is found at 1 to 249 (MWITQEITPY…DIHRAAFALP (249 aa)). An S-methyl-5'-thioadenosine-binding site is contributed by Asn-29. Asp-83 is a spermidine binding site. Catalysis depends on Asp-155, which acts as the Proton acceptor.

Belongs to the spermidine/spermine synthase family. As to quaternary structure, homodimer or homotetramer.

The protein resides in the cytoplasm. The catalysed reaction is S-adenosyl 3-(methylsulfanyl)propylamine + putrescine = S-methyl-5'-thioadenosine + spermidine + H(+). It participates in amine and polyamine biosynthesis; spermidine biosynthesis; spermidine from putrescine: step 1/1. Functionally, catalyzes the irreversible transfer of a propylamine group from the amino donor S-adenosylmethioninamine (decarboxy-AdoMet) to putrescine (1,4-diaminobutane) to yield spermidine. The sequence is that of Polyamine aminopropyltransferase from Helicobacter acinonychis (strain Sheeba).